The following is a 37-amino-acid chain: Large ribosomal subunit protein bL36 (37 aa).

This sequence belongs to the bacterial ribosomal protein bL36 family.

The chain is Large ribosomal subunit protein bL36 from Caldicellulosiruptor saccharolyticus (strain ATCC 43494 / DSM 8903 / Tp8T 6331).